Reading from the N-terminus, the 297-residue chain is Aspartate carbamoyltransferase catalytic subunit (297 aa).

The carbamoyl phosphate site is built by arginine 49 and threonine 50. Position 77 (lysine 77) interacts with L-aspartate. Positions 99, 129, and 132 each coordinate carbamoyl phosphate. 2 residues coordinate L-aspartate: arginine 162 and arginine 215. Carbamoyl phosphate-binding residues include glycine 256 and proline 257.

This sequence belongs to the aspartate/ornithine carbamoyltransferase superfamily. ATCase family. Heterododecamer (2C3:3R2) of six catalytic PyrB chains organized as two trimers (C3), and six regulatory PyrI chains organized as three dimers (R2).

It catalyses the reaction carbamoyl phosphate + L-aspartate = N-carbamoyl-L-aspartate + phosphate + H(+). Its pathway is pyrimidine metabolism; UMP biosynthesis via de novo pathway; (S)-dihydroorotate from bicarbonate: step 2/3. In terms of biological role, catalyzes the condensation of carbamoyl phosphate and aspartate to form carbamoyl aspartate and inorganic phosphate, the committed step in the de novo pyrimidine nucleotide biosynthesis pathway. This is Aspartate carbamoyltransferase catalytic subunit from Legionella pneumophila (strain Lens).